Here is an 81-residue protein sequence, read N- to C-terminus: ATP synthase subunit c, chloroplastic (81 aa).

A run of 2 helical transmembrane segments spans residues 7–27 (AASV…PGIG) and 57–77 (LAFM…LLFA).

It belongs to the ATPase C chain family. In terms of assembly, F-type ATPases have 2 components, F(1) - the catalytic core - and F(0) - the membrane proton channel. F(1) has five subunits: alpha(3), beta(3), gamma(1), delta(1), epsilon(1). F(0) has four main subunits: a(1), b(1), b'(1) and c(10-14). The alpha and beta chains form an alternating ring which encloses part of the gamma chain. F(1) is attached to F(0) by a central stalk formed by the gamma and epsilon chains, while a peripheral stalk is formed by the delta, b and b' chains.

Its subcellular location is the plastid. It localises to the chloroplast thylakoid membrane. Functionally, f(1)F(0) ATP synthase produces ATP from ADP in the presence of a proton or sodium gradient. F-type ATPases consist of two structural domains, F(1) containing the extramembraneous catalytic core and F(0) containing the membrane proton channel, linked together by a central stalk and a peripheral stalk. During catalysis, ATP synthesis in the catalytic domain of F(1) is coupled via a rotary mechanism of the central stalk subunits to proton translocation. In terms of biological role, key component of the F(0) channel; it plays a direct role in translocation across the membrane. A homomeric c-ring of between 10-14 subunits forms the central stalk rotor element with the F(1) delta and epsilon subunits. The polypeptide is ATP synthase subunit c, chloroplastic (Pelargonium hortorum (Common geranium)).